The following is a 1037-amino-acid chain: Probable inorganic carbon transporter subunit DabA 1 (1037 aa).

Cys-460, Asp-462, His-719, and Cys-734 together coordinate Zn(2+).

Belongs to the inorganic carbon transporter (TC 9.A.2) DabA family. In terms of assembly, forms a complex with DabB. Zn(2+) serves as cofactor.

The protein localises to the cell inner membrane. Its function is as follows. Part of an energy-coupled inorganic carbon pump. In Nitrobacter winogradskyi (strain ATCC 25391 / DSM 10237 / CIP 104748 / NCIMB 11846 / Nb-255), this protein is Probable inorganic carbon transporter subunit DabA 1.